A 460-amino-acid chain; its full sequence is Xyloglucan 6-xylosyltransferase 1 (460 aa).

Residues 1 to 20 (MIEKCIGAHRFRRLQRFMRQ) are Cytoplasmic-facing. The helical; Signal-anchor for type II membrane protein transmembrane segment at 21–40 (GKVTILCLVLTVIVLRGTIG) threads the bilayer. Residues 41–460 (AGKFGTPEKD…KAAKLSTTTT (420 aa)) lie on the Lumenal side of the membrane. UDP-alpha-D-xylose-binding positions include Gly156 and 227–229 (DSD). 2 residues coordinate Mn(2+): Asp227 and Asp229. His346 contributes to the substrate binding site. Residues His377, Gly380, and Lys382 each contribute to the UDP-alpha-D-xylose site. His377 lines the Mn(2+) pocket. Substrate contacts are provided by residues Lys382 and 389–390 (DY). An N-linked (GlcNAc...) asparagine glycan is attached at Asn431.

It belongs to the glycosyltransferase 34 family. In terms of assembly, forms homodimer. Interacts with XXT2. Mn(2+) is required as a cofactor.

It localises to the golgi apparatus membrane. The catalysed reaction is Transfers an alpha-D-xylosyl residue from UDP-D-xylose to a glucose residue in xyloglucan, forming an alpha-(1-&gt;6)-D-xylosyl-D-glucose linkage.. It participates in protein modification; protein glycosylation. Functionally, xylosyltransferase specific to UDP-D-xylose that accepts both cellopentaose and cellohexaose as substrates, with a better use of cellohexaose, to produce xyloglucan. Adds preferentially the first xylosyl residue to the fourth glucosyl residue from the reducing end of both acceptors. Transfer one xylose mainly to the second glucose residue from the non-reducing end. The acceptor should have a minimum of four glucose residues. This chain is Xyloglucan 6-xylosyltransferase 1, found in Arabidopsis thaliana (Mouse-ear cress).